A 673-amino-acid polypeptide reads, in one-letter code: UvrABC system protein B (673 aa).

Residues glutamate 26–proline 415 enclose the Helicase ATP-binding domain. Glycine 39–threonine 46 lines the ATP pocket. Residues tyrosine 92 to valine 115 carry the Beta-hairpin motif. The region spanning glutamine 431 to leucine 597 is the Helicase C-terminal domain. Residues alanine 608–methionine 627 form a disordered region. The 36-residue stretch at glutamine 633–leucine 668 folds into the UVR domain.

This sequence belongs to the UvrB family. In terms of assembly, forms a heterotetramer with UvrA during the search for lesions. Interacts with UvrC in an incision complex.

It is found in the cytoplasm. In terms of biological role, the UvrABC repair system catalyzes the recognition and processing of DNA lesions. A damage recognition complex composed of 2 UvrA and 2 UvrB subunits scans DNA for abnormalities. Upon binding of the UvrA(2)B(2) complex to a putative damaged site, the DNA wraps around one UvrB monomer. DNA wrap is dependent on ATP binding by UvrB and probably causes local melting of the DNA helix, facilitating insertion of UvrB beta-hairpin between the DNA strands. Then UvrB probes one DNA strand for the presence of a lesion. If a lesion is found the UvrA subunits dissociate and the UvrB-DNA preincision complex is formed. This complex is subsequently bound by UvrC and the second UvrB is released. If no lesion is found, the DNA wraps around the other UvrB subunit that will check the other stand for damage. This Escherichia coli O6:H1 (strain CFT073 / ATCC 700928 / UPEC) protein is UvrABC system protein B.